The primary structure comprises 397 residues: Elongation factor Tu-1 (397 aa).

Residues 10 to 206 (KPHVNIGTIG…AVDESIPEPE (197 aa)) form the tr-type G domain. The interval 19–26 (GHIDHGKT) is G1. 19–26 (GHIDHGKT) serves as a coordination point for GTP. Thr26 is a binding site for Mg(2+). A G2 region spans residues 62–66 (GITIS). A G3 region spans residues 83-86 (DCPG). GTP contacts are provided by residues 83–87 (DCPGH) and 138–141 (NKAD). The interval 138 to 141 (NKAD) is G4. Residues 176-178 (SAL) form a G5 region.

It belongs to the TRAFAC class translation factor GTPase superfamily. Classic translation factor GTPase family. EF-Tu/EF-1A subfamily. In terms of assembly, monomer.

The protein localises to the cytoplasm. It carries out the reaction GTP + H2O = GDP + phosphate + H(+). In terms of biological role, GTP hydrolase that promotes the GTP-dependent binding of aminoacyl-tRNA to the A-site of ribosomes during protein biosynthesis. In Streptomyces ramocissimus, this protein is Elongation factor Tu-1.